The following is a 311-amino-acid chain: Fructose-1,6-bisphosphatase class 1 (311 aa).

Mg(2+) is bound by residues Glu90, Asp110, Leu112, and Asp113. Substrate is bound by residues 113 to 116 (DGSS), Tyr221, and Lys251. Glu257 is a Mg(2+) binding site.

Belongs to the FBPase class 1 family. In terms of assembly, homotetramer. Mg(2+) is required as a cofactor.

The protein localises to the cytoplasm. The catalysed reaction is beta-D-fructose 1,6-bisphosphate + H2O = beta-D-fructose 6-phosphate + phosphate. The protein operates within carbohydrate biosynthesis; gluconeogenesis. This Methanospirillum hungatei JF-1 (strain ATCC 27890 / DSM 864 / NBRC 100397 / JF-1) protein is Fructose-1,6-bisphosphatase class 1.